Reading from the N-terminus, the 336-residue chain is Coproporphyrin III ferrochelatase (336 aa).

Fe-coproporphyrin III contacts are provided by S52 and Y116. Fe(2+) is bound by residues H172 and E255.

The protein belongs to the ferrochelatase family.

It is found in the cytoplasm. The enzyme catalyses Fe-coproporphyrin III + 2 H(+) = coproporphyrin III + Fe(2+). It participates in porphyrin-containing compound metabolism; protoheme biosynthesis. In terms of biological role, involved in coproporphyrin-dependent heme b biosynthesis. Catalyzes the insertion of ferrous iron into coproporphyrin III to form Fe-coproporphyrin III. The chain is Coproporphyrin III ferrochelatase from Mycolicibacterium paratuberculosis (strain ATCC BAA-968 / K-10) (Mycobacterium paratuberculosis).